The primary structure comprises 59 residues: Large ribosomal subunit protein uL30 (59 aa).

Belongs to the universal ribosomal protein uL30 family. As to quaternary structure, part of the 50S ribosomal subunit.

In Acetivibrio thermocellus (strain ATCC 27405 / DSM 1237 / JCM 9322 / NBRC 103400 / NCIMB 10682 / NRRL B-4536 / VPI 7372) (Clostridium thermocellum), this protein is Large ribosomal subunit protein uL30.